Here is a 443-residue protein sequence, read N- to C-terminus: ATP-dependent protease ATPase subunit HslU (443 aa).

Residues Ile-18, 60 to 65 (GVGKTE), Asp-256, Glu-321, and Arg-393 each bind ATP.

The protein belongs to the ClpX chaperone family. HslU subfamily. In terms of assembly, a double ring-shaped homohexamer of HslV is capped on each side by a ring-shaped HslU homohexamer. The assembly of the HslU/HslV complex is dependent on binding of ATP.

Its subcellular location is the cytoplasm. Its function is as follows. ATPase subunit of a proteasome-like degradation complex; this subunit has chaperone activity. The binding of ATP and its subsequent hydrolysis by HslU are essential for unfolding of protein substrates subsequently hydrolyzed by HslV. HslU recognizes the N-terminal part of its protein substrates and unfolds these before they are guided to HslV for hydrolysis. This is ATP-dependent protease ATPase subunit HslU from Escherichia coli O157:H7 (strain EC4115 / EHEC).